Here is a 189-residue protein sequence, read N- to C-terminus: MIVILNNGGQYVHRIQRSLKYLDVPAKIVPNSTTLEEIAANPEIKGVILSGGPDITKATNCENIALNSELPVLGICLGHQLISKAYGGEVSRADSEEYASIKIYVKQENDLFKGVPSEFTAWASHMDEVKVTPDCFEVLAYSDICGVESIKHKEKSIYGVQFHPEVSHTEYGDIILKNFCKKCGFGFEE.

The region spanning 1 to 189 (MIVILNNGGQ…CKKCGFGFEE (189 aa)) is the Glutamine amidotransferase type-1 domain. C76 (nucleophile) is an active-site residue. Residues H163 and E165 contribute to the active site.

Heterodimer composed of a glutamine amidotransferase subunit (A) and a GMP-binding subunit (B).

It catalyses the reaction XMP + L-glutamine + ATP + H2O = GMP + L-glutamate + AMP + diphosphate + 2 H(+). Its pathway is purine metabolism; GMP biosynthesis; GMP from XMP (L-Gln route): step 1/1. In terms of biological role, catalyzes the synthesis of GMP from XMP. The chain is GMP synthase [glutamine-hydrolyzing] subunit A from Methanococcus maripaludis (strain DSM 14266 / JCM 13030 / NBRC 101832 / S2 / LL).